Here is a 513-residue protein sequence, read N- to C-terminus: DNA damage response protein kinase DUN1 (513 aa).

The segment covering 1–12 has biased composition (basic and acidic residues); it reads MSLSTKREHSGD. Residues 1-29 form a disordered region; it reads MSLSTKREHSGDVTDSSFKRQQRSNKPSS. Ser10 carries the post-translational modification Phosphoserine. The region spanning 56 to 112 is the FHA domain; the sequence is TTIGRSRSCDVILSEPDISTFHAEFHLLQMDVDNFQRNLINVIDKSRNGTFINGNRL. At Ser139 the chain carries Phosphoserine. Residues 200-480 enclose the Protein kinase domain; sequence YLLGKELGAG…IDEALNHPWF (281 aa). ATP-binding positions include 206–214 and Lys229; that span reads LGAGHYALV. Asp328 serves as the catalytic Proton acceptor. Thr380 is modified (phosphothreonine).

The protein belongs to the protein kinase superfamily. CAMK Ser/Thr protein kinase family. CHEK2 subfamily. In terms of assembly, interacts with the PAB-dependent poly(A)-nuclease (PAN) complex regulatory subunit PAN3 via its forkhead-associated (FHA) domain. In terms of processing, autophosphorylation increases in response to DNA damage.

It localises to the nucleus. It carries out the reaction L-seryl-[protein] + ATP = O-phospho-L-seryl-[protein] + ADP + H(+). The enzyme catalyses L-threonyl-[protein] + ATP = O-phospho-L-threonyl-[protein] + ADP + H(+). Transducer of the DNA damage signal. Phosphorylates SML1 on serine residues. Cooperates with the PAN deadenylation complex in the regulation of RAD5 mRNA levels and cell survival in response to replicational stress. In Saccharomyces cerevisiae (strain ATCC 204508 / S288c) (Baker's yeast), this protein is DNA damage response protein kinase DUN1 (DUN1).